Consider the following 1612-residue polypeptide: Phospholipid-transporting ATPase DNF2 (1612 aa).

Residues 1-74 (MSSPSKPTSP…MKDISTPDLS (74 aa)) form a disordered region. The Cytoplasmic segment spans residues 1-252 (MSSPSKPTSP…TFFPKNILFQ (252 aa)). The segment covering 20–30 (GSASNGLSSMS) has biased composition (low complexity). T70 carries the phosphothreonine modification. S85 is modified (phosphoserine). The chain crosses the membrane as a helical span at residues 253–273 (FHNFANIYFLILLILGAFQIF). The interval 272–279 (IFGVTNPG) is involved in phosphatidylcholine substrate selection. The Extracellular segment spans residues 274–277 (GVTN). A helical membrane pass occupies residues 278–298 (PGFASVPLIVIVIITAIKDGI). At 299 to 598 (EDSRRTVLDL…RISRELNFSV (300 aa)) the chain is on the cytoplasmic side. The span at 364 to 373 (KLQKKREELR) shows a compositional bias: basic and acidic residues. The interval 364–384 (KLQKKREELRRKRNSRSFGPR) is disordered. A phosphoserine mark is found at S389, S392, S396, and S403. Residue Y406 is modified to Phosphotyrosine. A helical membrane pass occupies residues 599–619 (ILNFVLLFILCFTAGIVNGVY). Topologically, residues 620–639 (YKQKPRSRDYFEFGTIGGSA) are extracellular. Positions 631-635 (EFGTI) are involved in phosphatidylcholine substrate selection. The helical transmembrane segment at 640–660 (STNGFVSFWVAVILYQSLVPI) threads the bilayer. Over 661–1231 (SLYISVEIIK…WCYKRLAEMI (571 aa)) the chain is Cytoplasmic. The 4-aspartylphosphate intermediate role is filled by D712. ATP contacts are provided by D712, K713, and T714. D712 contacts Mg(2+). T714 lines the Mg(2+) pocket. Position 782 is a phosphothreonine (T782). ATP is bound by residues E846, F887, S889, K892, and K916. A Glycyl lysine isopeptide (Lys-Gly) (interchain with G-Cter in ubiquitin) cross-link involves residue K938. Residues R952, T953, T1032, G1033, D1034, R1147, and K1153 each contribute to the ATP site. D1173 lines the Mg(2+) pocket. N1176 and D1177 together coordinate ATP. D1177 contacts Mg(2+). The chain crosses the membrane as a helical span at residues 1232–1252 (PQFFYKNVIFTLSLFWYGIYN). The Extracellular segment spans residues 1253-1262 (NFDGSYLFEY). A helical transmembrane segment spans residues 1263–1283 (TYLTFYNLAFTSVPVILLAVL). Residues 1284–1313 (DQDVSDTVSMLVPQLYRVGILRKEWNQTKF) are Cytoplasmic-facing. A helical transmembrane segment spans residues 1314–1334 (LWYMLDGVYQSVICFFFPYLA). The Extracellular portion of the chain corresponds to 1335–1350 (YHKNMVVTENGLGLDH). Residues 1351–1371 (RYFVGVFVTAIAVTSCNFYVF) traverse the membrane as a helical segment. Over 1372-1377 (MEQYRW) the chain is Cytoplasmic. Residues 1378–1398 (DWFCGLFICLSLAVFYGWTGI) traverse the membrane as a helical segment. Residues 1399 to 1418 (WTSSSSSNEFYKGAARVFAQ) lie on the Extracellular side of the membrane. Residues 1419–1439 (PAYWAVLFVGVLFCLLPRFTI) traverse the membrane as a helical segment. R1436 serves as a coordination point for a 1,2-diacyl-sn-glycero-3-phospho-L-serine. Residues 1440-1612 (DCIRKIFYPK…TLLSQRSRDR (173 aa)) lie on the Cytoplasmic side of the membrane. Phosphoserine is present on S1542. The interval 1544-1563 (VTTTNNLPRRSMASARGNKL) is disordered. S1592 carries the phosphoserine modification.

This sequence belongs to the cation transport ATPase (P-type) (TC 3.A.3) family. Type IV subfamily. Component of a flippase complex consisting of DNF1 and LEM3. Interacts with LEM3; the interaction is direct. Mg(2+) serves as cofactor. Post-translationally, phosphorylated by FPK1 and KIN82.

It is found in the cell membrane. It carries out the reaction ATP + H2O + phospholipidSide 1 = ADP + phosphate + phospholipidSide 2.. The enzyme catalyses a 1,2-diacyl-sn-glycero-3-phosphoethanolamine(out) + ATP + H2O = a 1,2-diacyl-sn-glycero-3-phosphoethanolamine(in) + ADP + phosphate + H(+). It catalyses the reaction a 1,2-diacyl-sn-glycero-3-phosphocholine(out) + ATP + H2O = a 1,2-diacyl-sn-glycero-3-phosphocholine(in) + ADP + phosphate + H(+). The catalysed reaction is a beta-D-glucosyl-(1&lt;-&gt;1')-N-acylsphing-4-enine(out) + ATP + H2O = a beta-D-glucosyl-(1&lt;-&gt;1')-N-acylsphing-4-enine(in) + ADP + phosphate + H(+). It carries out the reaction a 1,2-diacyl-sn-glycero-3-phospho-L-serine(out) + ATP + H2O = a 1,2-diacyl-sn-glycero-3-phospho-L-serine(in) + ADP + phosphate + H(+). Its activity is regulated as follows. Phosphatidylcholine flippase activity is inhibited by glucosylsphingosine, lactosylsphingosine, lysophosphatidylcholine and to a lesser degree sphingosine-1-phosphate and lysosphingomyelin. Glucosylceramide flippase activity is inhibited by lysophosphatidylcholine, glucosylsphingosine and to a lesser degree lactosylsphingosine whereas lysosphingomyelin has a stimulatory effect at low concentrations. In terms of biological role, catalytic component of a P4-ATPase flippase complex which catalyzes the hydrolysis of ATP coupled to the transport of glucosylceramide, phosphatidylcholine, phosphatidylethanolamine, and small amounts of phosphatidylserine from the lumenal to the cytosolic leaflet of the cell membrane and ensures the maintenance of asymmetric distribution of phospholipids. Does not appear to transport sphingomyelin, inositol phosphoceramide or phosphatidic acid. Required for efficient endocytosis. Required for protein transport from Golgi to vacuoles. This chain is Phospholipid-transporting ATPase DNF2 (DNF2), found in Saccharomyces cerevisiae (strain ATCC 204508 / S288c) (Baker's yeast).